The following is a 134-amino-acid chain: uncharacterized protein (134 aa).

This is an uncharacterized protein from Acanthamoeba polyphaga (Amoeba).